Here is a 211-residue protein sequence, read N- to C-terminus: Dihydrofolate reductase (211 aa).

The DHFR domain occupies 7 to 210 (PIVGIVACLQ…YCFEFTLYNR (204 aa)). NADP(+) contacts are provided by residues alanine 13 and 20 to 26 (GIGFRGG). A substrate-binding site is contributed by 34-39 (EMKYFR). 58–60 (RKT) is an NADP(+) binding site. Residue arginine 74 coordinates substrate. Residues 80 to 82 (SRS) and 123 to 130 (GGGEVYSQ) each bind NADP(+).

The protein belongs to the dihydrofolate reductase family.

The catalysed reaction is (6S)-5,6,7,8-tetrahydrofolate + NADP(+) = 7,8-dihydrofolate + NADPH + H(+). Its pathway is cofactor biosynthesis; tetrahydrofolate biosynthesis; 5,6,7,8-tetrahydrofolate from 7,8-dihydrofolate: step 1/1. Its function is as follows. Key enzyme in folate metabolism. Catalyzes an essential reaction for de novo glycine and purine synthesis, and for DNA precursor synthesis. The sequence is that of Dihydrofolate reductase (DFR1) from Saccharomyces cerevisiae (strain ATCC 204508 / S288c) (Baker's yeast).